Here is a 130-residue protein sequence, read N- to C-terminus: Small ribosomal subunit protein uS8 (130 aa).

The protein belongs to the universal ribosomal protein uS8 family. As to quaternary structure, part of the 30S ribosomal subunit. Contacts proteins S5 and S12.

One of the primary rRNA binding proteins, it binds directly to 16S rRNA central domain where it helps coordinate assembly of the platform of the 30S subunit. This Sodalis glossinidius (strain morsitans) protein is Small ribosomal subunit protein uS8.